The following is a 382-amino-acid chain: Lipid-A-disaccharide synthase (382 aa).

Belongs to the LpxB family.

It carries out the reaction 2-N,3-O-bis[(3R)-3-hydroxytetradecanoyl]-alpha-D-glucosaminyl 1-phosphate + UDP-2-N,3-O-bis[(3R)-3-hydroxytetradecanoyl]-alpha-D-glucosamine = lipid A disaccharide (E. coli) + UDP + H(+). The catalysed reaction is a lipid X + a UDP-2-N,3-O-bis[(3R)-3-hydroxyacyl]-alpha-D-glucosamine = a lipid A disaccharide + UDP + H(+). It participates in glycolipid biosynthesis; lipid IV(A) biosynthesis; lipid IV(A) from (3R)-3-hydroxytetradecanoyl-[acyl-carrier-protein] and UDP-N-acetyl-alpha-D-glucosamine: step 5/6. Functionally, condensation of UDP-2,3-diacylglucosamine and 2,3-diacylglucosamine-1-phosphate to form lipid A disaccharide, a precursor of lipid A, a phosphorylated glycolipid that anchors the lipopolysaccharide to the outer membrane of the cell. This is Lipid-A-disaccharide synthase from Citrobacter koseri (strain ATCC BAA-895 / CDC 4225-83 / SGSC4696).